Consider the following 390-residue polypeptide: Chorismate synthase 1 (390 aa).

Positions 39 and 45 each coordinate NADP(+). FMN is bound by residues R132–S134, N253–A254, G298, K313–T317, and R339.

The protein belongs to the chorismate synthase family. Homotetramer. It depends on FMNH2 as a cofactor.

The catalysed reaction is 5-O-(1-carboxyvinyl)-3-phosphoshikimate = chorismate + phosphate. The protein operates within metabolic intermediate biosynthesis; chorismate biosynthesis; chorismate from D-erythrose 4-phosphate and phosphoenolpyruvate: step 7/7. Its function is as follows. Catalyzes the anti-1,4-elimination of the C-3 phosphate and the C-6 proR hydrogen from 5-enolpyruvylshikimate-3-phosphate (EPSP) to yield chorismate, which is the branch point compound that serves as the starting substrate for the three terminal pathways of aromatic amino acid biosynthesis. This reaction introduces a second double bond into the aromatic ring system. This chain is Chorismate synthase 1, found in Bacillus anthracis.